Here is a 421-residue protein sequence, read N- to C-terminus: Trimethyllysine dioxygenase, mitochondrial (421 aa).

The transit peptide at 1–15 (MWYHKLLHQQSRLQN) directs the protein to the mitochondrion. N6-acetyllysine occurs at positions 179 and 236. Fe cation-binding residues include H242, D244, and H389.

It belongs to the gamma-BBH/TMLD family. In terms of assembly, homodimer. Fe(2+) serves as cofactor. L-ascorbate is required as a cofactor.

Its subcellular location is the mitochondrion matrix. The enzyme catalyses N(6),N(6),N(6)-trimethyl-L-lysine + 2-oxoglutarate + O2 = (3S)-3-hydroxy-N(6),N(6),N(6)-trimethyl-L-lysine + succinate + CO2. Its pathway is amine and polyamine biosynthesis; carnitine biosynthesis. Converts trimethyllysine (TML) into hydroxytrimethyllysine (HTML). In Rattus norvegicus (Rat), this protein is Trimethyllysine dioxygenase, mitochondrial (Tmlhe).